A 72-amino-acid polypeptide reads, in one-letter code: MFTLKKPLLLLVFLGMISLSLCQDERGADEDDGGEMTEEEKRGAFGNLLKGVAKKAGLKILSIAQCKLSGTC.

Positions 1–22 are cleaved as a signal peptide; it reads MFTLKKPLLLLVFLGMISLSLC. Residues 23-40 constitute a propeptide, removed in mature form; the sequence is QDERGADEDDGGEMTEEE. Residues cysteine 66 and cysteine 72 are joined by a disulfide bond.

This sequence belongs to the frog skin active peptide (FSAP) family. Brevinin subfamily. In terms of tissue distribution, expressed by the skin glands.

It localises to the secreted. Its function is as follows. Antimicrobial peptide. Active against a variety of Gram-negative and Gram-positive bacterial strains. Active against fungus C.glabrata 090902 but not against C.albicans ATCC 10231. Shows hemolytic activity against human erythrocytes. The polypeptide is Brevinin-2SN3 (Sylvirana spinulosa (Fine-spined frog)).